A 199-amino-acid chain; its full sequence is Recombination protein RecR (199 aa).

The C4-type zinc-finger motif lies at Cys58–Cys73. Residues Ala81–Pro176 form the Toprim domain.

This sequence belongs to the RecR family.

Its function is as follows. May play a role in DNA repair. It seems to be involved in an RecBC-independent recombinational process of DNA repair. It may act with RecF and RecO. The chain is Recombination protein RecR from Azoarcus sp. (strain BH72).